Reading from the N-terminus, the 233-residue chain is MIDMHLHSTFSYDGKAEIDDIISQVQKLGIEHFCITDHYEYENGELVHDFNVEEYFLTMEKYDLPKGAEISWDGVGEAVFPDGFDYLLLGIHRYDENLPPDELARDYLERTLFVMERVKFHTLAHLDYPARYAKADFKANRDLIEKILVFLVKNEKALEINTAGLFKHGKPNPDYWIVEMYYDLGGRVVTIGSDAHESQHIGRGIEEVMRELKKFNFEYLAVDGKKLVTVKLR.

Belongs to the PHP hydrolase family. HisK subfamily.

It carries out the reaction L-histidinol phosphate + H2O = L-histidinol + phosphate. It functions in the pathway amino-acid biosynthesis; L-histidine biosynthesis; L-histidine from 5-phospho-alpha-D-ribose 1-diphosphate: step 8/9. The chain is Probable histidinol-phosphatase (hisK) from Thermotoga maritima (strain ATCC 43589 / DSM 3109 / JCM 10099 / NBRC 100826 / MSB8).